A 437-amino-acid polypeptide reads, in one-letter code: tRNA-2-methylthio-N(6)-dimethylallyladenosine synthase (437 aa).

One can recognise an MTTase N-terminal domain in the interval 2–117 (KHLYIKTFGC…LPQMIQRALD (116 aa)). Residues cysteine 11, cysteine 48, cysteine 80, cysteine 154, cysteine 158, and cysteine 161 each contribute to the [4Fe-4S] cluster site. The region spanning 140–372 (RAQGVVGQVT…QQLLNTQQLQ (233 aa)) is the Radical SAM core domain. The TRAM domain maps to 375-437 (KARVGRRESV…LPNSLRGRLV (63 aa)).

It belongs to the methylthiotransferase family. MiaB subfamily. In terms of assembly, monomer. Requires [4Fe-4S] cluster as cofactor.

The protein resides in the cytoplasm. The enzyme catalyses N(6)-dimethylallyladenosine(37) in tRNA + (sulfur carrier)-SH + AH2 + 2 S-adenosyl-L-methionine = 2-methylsulfanyl-N(6)-dimethylallyladenosine(37) in tRNA + (sulfur carrier)-H + 5'-deoxyadenosine + L-methionine + A + S-adenosyl-L-homocysteine + 2 H(+). In terms of biological role, catalyzes the methylthiolation of N6-(dimethylallyl)adenosine (i(6)A), leading to the formation of 2-methylthio-N6-(dimethylallyl)adenosine (ms(2)i(6)A) at position 37 in tRNAs that read codons beginning with uridine. This is tRNA-2-methylthio-N(6)-dimethylallyladenosine synthase from Magnetococcus marinus (strain ATCC BAA-1437 / JCM 17883 / MC-1).